A 518-amino-acid polypeptide reads, in one-letter code: Glutamate--cysteine ligase (518 aa).

This sequence belongs to the glutamate--cysteine ligase type 1 family. Type 1 subfamily.

The enzyme catalyses L-cysteine + L-glutamate + ATP = gamma-L-glutamyl-L-cysteine + ADP + phosphate + H(+). The protein operates within sulfur metabolism; glutathione biosynthesis; glutathione from L-cysteine and L-glutamate: step 1/2. The chain is Glutamate--cysteine ligase from Escherichia coli O7:K1 (strain IAI39 / ExPEC).